A 37-amino-acid polypeptide reads, in one-letter code: Gene 40 protein (37 aa).

The chain is Gene 40 protein (40) from Mycobacterium phage L5 (Mycobacteriophage L5).